The chain runs to 600 residues: Single-strand DNA endonuclease 1 (600 aa).

Residues 1–97 are N-domain; sequence MGVKYLWDVL…KRRLKARFEI (97 aa). The tract at residues 2 to 97 is XPG-N domain; sequence GVKYLWDVLE…KRRLKARFEI (96 aa). Positions 30, 76, 142, 144, 163, 165, and 215 each coordinate Mg(2+). Residues 130–215 form an XPG-I domain region; it reads STLGILCLDG…IALALLLGSD (86 aa). 2 I-domain regions span residues 130-218 and 130-219; these read STLG…DYSQ and STLG…YSQG. A 5'-3' exonuclease domain region spans residues 215–353; the sequence is DYSQGVRGLR…ILPKVAERNL (139 aa). The disordered stretch occupies residues 433–458; sequence MAAKKKKPKPKQKQKETSSPTKSSSL. A compositionally biased stretch (basic residues) spans 435 to 444; the sequence is AKKKKPKPKQ.

The protein belongs to the XPG/RAD2 endonuclease family. GEN subfamily. It depends on Mg(2+) as a cofactor.

It is found in the nucleus. Endonuclease which cleaves flap structures at the junction between single-stranded DNA and double-stranded DNA with a specific cleavage site in the 5' overhang strand exactly one nucleotide 3' of the branch point. Structure- and sequence-specific nuclease that resolves holliday junctions (HJs) by symmetrically oriented incisions in two opposing strands near the junction point, thus leading to ligatable products; HJs are physical links between homologous DNA molecules that arise as central intermediary structures during homologous recombination and repair in meiotic and somatic cells. Structure-specific nuclease with 5'-flap endonuclease activity, preferentially cleaving static flaps 5' overhang strand exactly one nucleotide in the 3' direction of the branch point and, to lower extent, on the two neighboring positions. Also able to cleave double-stranded flap strand 1 one nucleotide in the 3' direction of the branch point. Together with MUS81, essential for the resolution of toxic replication structures to ensure genome stability, and to maintain telomere integrity and replication. This is Single-strand DNA endonuclease 1 from Arabidopsis thaliana (Mouse-ear cress).